A 925-amino-acid chain; its full sequence is Nuclear factor of activated T-cells, cytoplasmic 2 (925 aa).

Residues 1 to 95 (MNAPERQPQP…FGEPDRVGPQ (95 aa)) form a disordered region. At Ser23 the chain carries Phosphoserine. The short motif at 26-34 (DELDFSILF) is the 9aaTAD element. Ser99, Ser107, and Ser110 each carry phosphoserine. Residues 111–116 (PRIEIT) are calcineurin-binding. Positions 119–199 (HELIQAVGPL…CVSPNNGGPD (81 aa)) are transactivation domain A (TAD-A). A phosphoserine mark is found at Ser148, Ser168, Ser171, Ser172, Ser174, Ser175, Ser177, and Ser180. The segment at 161-175 (YREPLCLSPASSGSS) is required for cytoplasmic retention of the phosphorylated form. A run of 2 repeats spans residues 184 to 200 (SPYTSPCVSPNNGGPDD) and 213 to 229 (SPRTSPIMSPRTSLAED). The interval 184-286 (SPYTSPCVSP…PQPSSHVAPQ (103 aa)) is 3 X approximate SP repeats. The tract at residues 195 to 297 (NGGPDDLCPQ…HGSPAGYPPV (103 aa)) is disordered. Residues Ser213, Ser217, Ser221, Ser236, and Ser243 each carry the phosphoserine modification. The span at 214-224 (PRTSPIMSPRT) shows a compositional bias: polar residues. A Nuclear localization signal motif is present at residues 251–253 (KRR). Ser255, Ser268, Ser274, Ser276, Ser280, Ser326, Ser330, and Ser363 each carry phosphoserine. Positions 264–281 (PPGASPQRSRSPSPQPSS) are enriched in low complexity. One copy of the 3; approximate repeat lies at 272–286 (SRSPSPQPSSHVAPQ). Positions 392–574 (ASLPPLEWPL…NPIECSQRSA (183 aa)) constitute an RHD domain. A DNA-binding region spans residues 421–428 (RAHYETEG). Residues 664-666 (KRK) carry the Nuclear localization signal motif. A phosphoserine mark is found at Ser755, Ser757, Ser759, Ser856, and Ser859. The interval 839-894 (PGTTRPGPPPVSQGQRLSPGSYPTVIQQQNATSQRAAKNGPPVSDQKEVLPAGVTI) is disordered. The segment covering 862 to 874 (TVIQQQNATSQRA) has biased composition (polar residues). The Nuclear export signal motif lies at 904-913 (YLDDVNEIIR).

In terms of assembly, member of the multicomponent NFATC transcription complex that consists of at least two components, a pre-existing cytoplasmic component NFATC2 and an inducible nuclear component NFATC1. Other members such as NFATC4, NFATC3 or members of the activating protein-1 family, MAF, GATA4 and Cbp/p300 can also bind the complex. The phosphorylated form specifically interacts with XPO1; which mediates nuclear export. NFATC proteins bind to DNA as monomers. Interacts with NFATC2IP. Interacts with FOXP3. Interacts with TBX21 ('Thr-303' phosphorylated form). Interacts with KAT2A. Interacts with HOMER2 and HOMER3; this interaction competes with calcineurin/PPP3CA-binding and hence prevents NFATC2 dephosphorylation and activation. Interacts with protein phosphatase PPP3CA/calcineurin A. Interacts with AKAP5 (via leucine zipper domain); this is required for NFATC2/NFAT1 recruitment to CRAC channels. In resting cells, phosphorylated by NFATC-kinase on at least 18 sites in the 99-363 region. Upon cell stimulation, all these sites except Ser-243 are dephosphorylated by calcineurin. Dephosphorylation induces a conformational change that simultaneously exposes an NLS and masks an NES, which results in nuclear localization. Simultaneously, Ser-53 or Ser-56 is phosphorylated; which is required for full transcriptional activity. In terms of processing, ubiquitinated in endothelial cells by RNF213 downstream of the non-canonical Wnt signaling pathway, leading to its degradation by the proteasome. As to expression, expressed in thymus, spleen, heart, testis, brain, placenta, muscle and pancreas. Isoform 1 is highly expressed in the small intestine, heart, testis, prostate, thymus, placenta and thyroid. Isoform 3 is highly expressed in stomach, uterus, placenta, trachea and thyroid.

The protein resides in the cytoplasm. It localises to the nucleus. Functionally, plays a role in the inducible expression of cytokine genes in T-cells, especially in the induction of the IL-2, IL-3, IL-4, TNF-alpha or GM-CSF. Promotes invasive migration through the activation of GPC6 expression and WNT5A signaling pathway. Is involved in the negative regulation of chondrogenesis. Recruited by AKAP5 to ORAI1 pore-forming subunit of CRAC channels in Ca(2+) signaling microdomains where store-operated Ca(2+) influx is coupled to calmodulin and calcineurin signaling and activation of NFAT-dependent transcriptional responses. The protein is Nuclear factor of activated T-cells, cytoplasmic 2 (NFATC2) of Homo sapiens (Human).